Here is a 133-residue protein sequence, read N- to C-terminus: uncharacterized protein (133 aa).

It belongs to the ycf68 family.

The protein localises to the plastid. It localises to the chloroplast. This is an uncharacterized protein from Oryza sativa subsp. japonica (Rice).